The chain runs to 382 residues: Toluene efflux pump periplasmic linker protein TtgD (382 aa).

The N-terminal stretch at 1–23 is a signal peptide; sequence MRLERALRARQLIPLAAIWLLVG. Residue cysteine 24 is the site of N-palmitoyl cysteine attachment. Residue cysteine 24 is the site of S-diacylglycerol cysteine attachment. Positions 100–136 form a coiled coil; it reads YEALLARAEASLLTAQNLARRYERLLDTNAISQQQYD.

This sequence belongs to the membrane fusion protein (MFP) (TC 8.A.1) family.

The protein resides in the cell inner membrane. Functionally, the periplasmic linker protein component of an inducible organic solvent efflux pump. Involved in export of toluene and styrene but not of m-xylene, propylbenzene or ethylbenzene. Is not involved in antibiotic or AMP efflux. The chain is Toluene efflux pump periplasmic linker protein TtgD (ttgD) from Pseudomonas putida (strain DOT-T1E).